Here is a 240-residue protein sequence, read N- to C-terminus: Uridylate kinase (240 aa).

ATP is bound at residue 13-16 (KISG). Gly-55 lines the UMP pocket. Positions 56 and 60 each coordinate ATP. UMP contacts are provided by residues Asp-75 and 136–143 (TGNPFFTT). Residues Thr-163, Gln-164, Tyr-169, and Asp-172 each contribute to the ATP site.

The protein belongs to the UMP kinase family. In terms of assembly, homohexamer.

The protein resides in the cytoplasm. The catalysed reaction is UMP + ATP = UDP + ADP. It participates in pyrimidine metabolism; CTP biosynthesis via de novo pathway; UDP from UMP (UMPK route): step 1/1. Inhibited by UTP. Functionally, catalyzes the reversible phosphorylation of UMP to UDP. This Paramagnetospirillum magneticum (strain ATCC 700264 / AMB-1) (Magnetospirillum magneticum) protein is Uridylate kinase.